Consider the following 150-residue polypeptide: UPF0098 protein TC_0109 (150 aa).

Belongs to the UPF0098 family.

This is UPF0098 protein TC_0109 from Chlamydia muridarum (strain MoPn / Nigg).